Here is a 532-residue protein sequence, read N- to C-terminus: Cyclin-L1 (532 aa).

2 cyclin-like regions span residues 94–196 and 209–293; these read ELIQ…RVLK and KIIV…ETLR. Residue threonine 331 is modified to Phosphothreonine. The tract at residues 332–532 is disordered; sequence PALSTLGGFS…SRSGHGRHRR (201 aa). 2 positions are modified to phosphoserine: serine 341 and serine 344. Glycyl lysine isopeptide (Lys-Gly) (interchain with G-Cter in SUMO2) cross-links involve residues lysine 345 and lysine 353. The span at 348–358 shows a compositional bias: basic and acidic residues; sequence SPREVKAEEKS. A phosphoserine mark is found at serine 358 and serine 361. Positions 367 to 376 are enriched in basic and acidic residues; sequence VKKEPEDRQQ. Residue lysine 368 forms a Glycyl lysine isopeptide (Lys-Gly) (interchain with G-Cter in SUMO2) linkage. Serine 380 is subject to Phosphoserine. Composition is skewed to basic residues over residues 388 to 424, 444 to 458, 466 to 482, and 492 to 504; these read DSKRSRTSRSASRSRSRTRSRSRSHSPRRHYNNRRSR, RRHHNHGSPHLKAKH, SNRHGHKRKKSRSRSQS, and KKHRHERGHHRDR. Residues 396–438 are RS; it reads RSASRSRSRTRSRSRSHSPRRHYNNRRSRSGTYSSRSRSRSRS. Serine 451 carries the post-translational modification Phosphoserine. Positions 505–514 are enriched in basic and acidic residues; sequence RERSRSFERS. Residues 515–532 show a composition bias toward basic residues; the sequence is HKGKHHGGSRSGHGRHRR.

The protein belongs to the cyclin family. Cyclin L subfamily. In terms of assembly, interacts with POLR2A via its hyperphosphorylated C-terminal domain (CTD). Interacts with CDK11A, CDK11B, CDK12 and CDK13. May form a ternary complex with CDK11B and casein kinase II (CKII). Interacts with pre-mRNA-splicing factors, including at least SRSF1, SRSF2 and SRSF7/SLU7. As to expression, widely expressed (at protein level).

Its subcellular location is the nucleus speckle. The protein resides in the nucleus. It localises to the nucleoplasm. The protein localises to the cytoplasm. Its function is as follows. Involved in pre-mRNA splicing. Functions in association with cyclin-dependent kinases (CDKs). May play a role in the regulation of RNA polymerase II (pol II). Inhibited by the CDK-specific inhibitor CDKN1A/p21. The protein is Cyclin-L1 (Ccnl1) of Mus musculus (Mouse).